A 339-amino-acid chain; its full sequence is Probable G-protein coupled receptor 33 (339 aa).

Topologically, residues 1–30 are extracellular; it reads MDLINSSTHVINVSTSLTNSTGVPTPAPKT. N-linked (GlcNAc...) asparagine glycosylation is found at N5, N12, and N19. Residues 31 to 53 form a helical membrane-spanning segment; the sequence is IIAASLFMAFIIGVISNGLYLWM. Residues 54–64 are Cytoplasmic-facing; it reads LQFKMQRTVNT. Residues 65 to 86 form a helical membrane-spanning segment; that stretch reads LLFFHLILSYFISTLILPFMAT. At 87-103 the chain is on the extracellular side; the sequence is SFLQDNHWVFGSVLCKA. Cysteines 101 and 179 form a disulfide. Residues 104–124 traverse the membrane as a helical segment; sequence FNSTLSVSMFASVFFLSAISV. Over 125 to 143 the chain is Cytoplasmic; the sequence is ARYYLILHPVWSQQHRTPH. A helical transmembrane segment spans residues 144–165; the sequence is WASRIALQIWISATILSIPYLV. Residues 166 to 209 are Extracellular-facing; it reads FRTTHDDHKGRIKCQNNYIVSTDWESKEHQTLGQWIHAACFVGR. A helical membrane pass occupies residues 210-230; sequence FLLGFLLPFLVIIFCYKRVAT. The Cytoplasmic portion of the chain corresponds to 231 to 246; that stretch reads KMKEKGLFKSSKPFKV. Residues 247 to 268 form a helical membrane-spanning segment; that stretch reads MVTAVISFFVCWMPYHVHSGLV. Topologically, residues 269 to 283 are extracellular; it reads LTKSQPLPLHLTLGL. Residues 284–303 form a helical membrane-spanning segment; the sequence is AVVTISFNTVVSPVLYLFTG. At 304–339 the chain is on the cytoplasmic side; sequence ENFKVFKKSILALFNSTFSDISSTERTQTLNSETEI.

This sequence belongs to the G-protein coupled receptor 1 family. Expressed predominantly in lung, spleen and testis.

It localises to the cell membrane. Its function is as follows. Orphan receptor; could be a chemoattractant receptor. In Mus musculus (Mouse), this protein is Probable G-protein coupled receptor 33 (Gpr33).